The sequence spans 389 residues: 5-hydroxytryptamine receptor 1B (389 aa).

The interval 1–27 (MEETNTHCAPPPPAGSQTGVSQANLSS) is disordered. Residues 1–45 (MEETNTHCAPPPPAGSQTGVSQANLSSAPPNCSTEGYIYQDSIAL) are Extracellular-facing. The segment covering 15–27 (GSQTGVSQANLSS) has biased composition (polar residues). N-linked (GlcNAc...) asparagine glycosylation is found at asparagine 24 and asparagine 31. The helical transmembrane segment at 46–71 (PWKVLLILVLALFTLATTLSNAFVIA) threads the bilayer. The Cytoplasmic portion of the chain corresponds to 72-85 (TVYRTRKLHTPANY). Residues 86–110 (LIASLAVTDLLVSILVMPISTMYTV) traverse the membrane as a helical segment. Residues 111–118 (TGRWTLGQ) lie on the Extracellular side of the membrane. Residues 119–144 (VVCDFWLSSDITCCTASILHLCVIAL) form a helical membrane-spanning segment. Cysteine 121 and cysteine 198 are disulfide-bonded. Residues aspartate 128 and threonine 133 each coordinate ergotamine. The DRY motif; important for ligand-induced conformation changes and signaling signature appears at 145 to 147 (DRY). Residues 145–164 (DRYWAITDAVEYSAKRTPKR) are Cytoplasmic-facing. Residues 165-183 (AAVMIALVWVFSISISLPP) form a helical membrane-spanning segment. Over 184-204 (FFWRQAKAEEEVSDCRVNTDH) the chain is Extracellular. Valine 200 lines the ergotamine pocket. A helical transmembrane segment spans residues 205–228 (MLYTVYSTVGAFYFPTLLLIALYG). Residues 229–314 (RIYVEARSRI…AARERKATKT (86 aa)) lie on the Cytoplasmic side of the membrane. Over residues 258 to 271 (DSPGSTSSVTSVNS) the composition is skewed to polar residues. Positions 258–281 (DSPGSTSSVTSVNSRAPDVPSESG) are disordered. Residues 315-336 (LGIILGAFIVCWLPFFIISLVM) traverse the membrane as a helical segment. Topologically, residues 337 to 346 (PICKDACWFH) are extracellular. The chain crosses the membrane as a helical span at residues 347-369 (LAIFDFFTWLGYLNSLINPIIYT). An NPxxY motif; important for ligand-induced conformation changes and signaling motif is present at residues 364-368 (NPIIY). Over 370–389 (MSNEDFKQAFHKLIRFKCTG) the chain is Cytoplasmic. Cysteine 387 carries S-palmitoyl cysteine lipidation.

The protein belongs to the G-protein coupled receptor 1 family. As to quaternary structure, homodimer. Heterodimer with HTR1D. Phosphorylated. Desensitization of the receptor may be mediated by its phosphorylation. Post-translationally, palmitoylated.

The protein resides in the cell membrane. G-protein coupled receptor for 5-hydroxytryptamine (serotonin). Also functions as a receptor for ergot alkaloid derivatives, various anxiolytic and antidepressant drugs and other psychoactive substances, such as lysergic acid diethylamide (LSD). Ligand binding causes a conformation change that triggers signaling via guanine nucleotide-binding proteins (G proteins) and modulates the activity of downstream effectors, such as adenylate cyclase. HTR1B is coupled to G(i)/G(o) G alpha proteins and mediates inhibitory neurotransmission by inhibiting adenylate cyclase activity. Arrestin family members inhibit signaling via G proteins and mediate activation of alternative signaling pathways. Regulates the release of 5-hydroxytryptamine, dopamine and acetylcholine in the brain, and thereby affects neural activity, nociceptive processing, pain perception, mood and behavior. Besides, plays a role in vasoconstriction of cerebral arteries. The polypeptide is 5-hydroxytryptamine receptor 1B (HTR1B) (Felis catus (Cat)).